The primary structure comprises 142 residues: Holo-[acyl-carrier-protein] synthase (142 aa).

2 residues coordinate Mg(2+): Asp-9 and Glu-63.

Belongs to the P-Pant transferase superfamily. AcpS family. Mg(2+) is required as a cofactor.

It is found in the cytoplasm. It catalyses the reaction apo-[ACP] + CoA = holo-[ACP] + adenosine 3',5'-bisphosphate + H(+). Transfers the 4'-phosphopantetheine moiety from coenzyme A to a Ser of acyl-carrier-protein. The protein is Holo-[acyl-carrier-protein] synthase of Burkholderia lata (strain ATCC 17760 / DSM 23089 / LMG 22485 / NCIMB 9086 / R18194 / 383).